We begin with the raw amino-acid sequence, 119 residues long: Methylglyoxal synthase (119 aa).

The 119-residue stretch at 1-119 folds into the MGS-like domain; it reads MKIALIAHDK…ESAKLIMADI (119 aa). Substrate is bound by residues His-8, Lys-12, 34-37, and 54-55; these read TGTT and SG. Catalysis depends on Asp-60, which acts as the Proton donor/acceptor. Position 87 (His-87) interacts with substrate.

Belongs to the methylglyoxal synthase family.

The catalysed reaction is dihydroxyacetone phosphate = methylglyoxal + phosphate. In terms of biological role, catalyzes the formation of methylglyoxal from dihydroxyacetone phosphate. This is Methylglyoxal synthase from Clostridium perfringens (strain ATCC 13124 / DSM 756 / JCM 1290 / NCIMB 6125 / NCTC 8237 / Type A).